The following is a 207-amino-acid chain: Holliday junction branch migration complex subunit RuvA (207 aa).

The segment at 1–64 (MIGRLTGILA…ETSQQLFGFS (64 aa)) is domain I. The tract at residues 65-142 (SQQDRELFRM…ALDTTPSEHS (78 aa)) is domain II. Residues 143 to 157 (PTGEGAGIVRVDPVI) form a flexible linker region. Residues 158–207 (NTNVIIADAESALIGLGYKPTEAAKAVSAAYNDTITTSEDLIRAALKGMI) form a domain III region.

The protein belongs to the RuvA family. As to quaternary structure, homotetramer. Forms an RuvA(8)-RuvB(12)-Holliday junction (HJ) complex. HJ DNA is sandwiched between 2 RuvA tetramers; dsDNA enters through RuvA and exits via RuvB. An RuvB hexamer assembles on each DNA strand where it exits the tetramer. Each RuvB hexamer is contacted by two RuvA subunits (via domain III) on 2 adjacent RuvB subunits; this complex drives branch migration. In the full resolvosome a probable DNA-RuvA(4)-RuvB(12)-RuvC(2) complex forms which resolves the HJ.

It localises to the cytoplasm. Its function is as follows. The RuvA-RuvB-RuvC complex processes Holliday junction (HJ) DNA during genetic recombination and DNA repair, while the RuvA-RuvB complex plays an important role in the rescue of blocked DNA replication forks via replication fork reversal (RFR). RuvA specifically binds to HJ cruciform DNA, conferring on it an open structure. The RuvB hexamer acts as an ATP-dependent pump, pulling dsDNA into and through the RuvAB complex. HJ branch migration allows RuvC to scan DNA until it finds its consensus sequence, where it cleaves and resolves the cruciform DNA. This is Holliday junction branch migration complex subunit RuvA from Saccharophagus degradans (strain 2-40 / ATCC 43961 / DSM 17024).